A 229-amino-acid chain; its full sequence is Cytochrome c oxidase subunit 2 (229 aa).

At 1-26 the chain is on the mitochondrial intermembrane side; that stretch reads MATWAQLNFQDAASPMMEQLHYFHDH. The helical transmembrane segment at 27–48 threads the bilayer; it reads TMMVLVIITIMVAYIMGTMFFN. At 49 to 62 the chain is on the mitochondrial matrix side; it reads KDVNRYLLDGQKIE. Residues 63-82 traverse the membrane as a helical segment; it reads TEWTIVPVFVLVIIAMPSLR. Residues 83-229 are Mitochondrial intermembrane-facing; sequence LLYLLDEVNE…INWIQNMSEA (147 aa). 6 residues coordinate Cu cation: His161, Cys196, Glu198, Cys200, His204, and Met207. Glu198 is a Mg(2+) binding site.

This sequence belongs to the cytochrome c oxidase subunit 2 family. As to quaternary structure, component of the cytochrome c oxidase (complex IV, CIV), a multisubunit enzyme composed of a catalytic core of 3 subunits and several supernumerary subunits. The complex exists as a monomer or a dimer and forms supercomplexes (SCs) in the inner mitochondrial membrane with ubiquinol-cytochrome c oxidoreductase (cytochrome b-c1 complex, complex III, CIII). Requires Cu cation as cofactor.

The protein resides in the mitochondrion inner membrane. The enzyme catalyses 4 Fe(II)-[cytochrome c] + O2 + 8 H(+)(in) = 4 Fe(III)-[cytochrome c] + 2 H2O + 4 H(+)(out). Its function is as follows. Component of the cytochrome c oxidase, the last enzyme in the mitochondrial electron transport chain which drives oxidative phosphorylation. The respiratory chain contains 3 multisubunit complexes succinate dehydrogenase (complex II, CII), ubiquinol-cytochrome c oxidoreductase (cytochrome b-c1 complex, complex III, CIII) and cytochrome c oxidase (complex IV, CIV), that cooperate to transfer electrons derived from NADH and succinate to molecular oxygen, creating an electrochemical gradient over the inner membrane that drives transmembrane transport and the ATP synthase. Cytochrome c oxidase is the component of the respiratory chain that catalyzes the reduction of oxygen to water. Electrons originating from reduced cytochrome c in the intermembrane space (IMS) are transferred via the dinuclear copper A center (CU(A)) of subunit 2 and heme A of subunit 1 to the active site in subunit 1, a binuclear center (BNC) formed by heme A3 and copper B (CU(B)). The BNC reduces molecular oxygen to 2 water molecules using 4 electrons from cytochrome c in the IMS and 4 protons from the mitochondrial matrix. This Sympetrum striolatum (Common darter dragonfly) protein is Cytochrome c oxidase subunit 2 (COII).